A 592-amino-acid polypeptide reads, in one-letter code: MASVVVKTIWQSKEIHEAGDTPTGVESCSQLVPEAPRRVTSRAKGIPKKKKAVSFHGVEPQMSHQPMHWCLNLKRSSACTNVSLLNLAAMEPTDSTGTDSTVEDLSGQLTLAGPPASPTLPWDPDDADITEILSGVNSGLVRAKDSITSLKEKTNRVNQHVQSLQSECSVLSENLERRRQEAEELEGYCIQLKENCWKVTRSVEDAEIKTNVLKQNSALLEEKLRYLQQQLQDETPRRQEAELQEPEEKQEPEEKQEPEEKQKPEAGLSWNSLGPAATSQGCPGPPGSPDKPSRPHGLVPAGWGMGPRAGEGPYVSEQELQKLFTGIEELRREVSSLTARWHQEEGAVQEALRLLGGLGGRVDGFLGQWERAQREQAQTARDLQELRGRADELCTMVERSAVSVASLRSELEGLGPLKPILEEFGRQFQNSRRGPDLSMNLDRSHQGNCARCASQGSQLSTESLQQLLDRALTSLVDEVKQRGLTPACPSCQRLHKKILELERQALAKHVRAEALSSTLRLAQDEALRAKNLLLTDKMKPEEKMATLDHLHLKMCSLHDHLSNLPLEGSTGTMGGGSSAGTPPKQGGSAPEQ.

S217 carries the post-translational modification Phosphoserine. The disordered stretch occupies residues 232 to 308; the sequence is QDETPRRQEA…VPAGWGMGPR (77 aa). The segment covering 234 to 264 has biased composition (basic and acidic residues); it reads ETPRRQEAELQEPEEKQEPEEKQEPEEKQKP. Residues 269–281 show a composition bias toward polar residues; that stretch reads SWNSLGPAATSQG. A Phosphoserine; by TSSK1 and TSSK2 modification is found at S288. Position 316 is a phosphoserine (S316). A disordered region spans residues 566–592; the sequence is LEGSTGTMGGGSSAGTPPKQGGSAPEQ.

Phosphorylated on serine residue(s) by STK22A/TSSK1 and STK22B/TSSK2. Highly expressed in testis. Expressed at low levels in prostate, female breast, placenta, ovary and thymus.

Its subcellular location is the cytoplasm. The protein localises to the cytoskeleton. The protein resides in the microtubule organizing center. It localises to the centrosome. It is found in the centriole. Its function is as follows. May play a role in testicular physiology, most probably in the process of spermatogenesis or spermatid development. The chain is Testis-specific serine kinase substrate (TSKS) from Homo sapiens (Human).